The chain runs to 667 residues: Trifunctional UDP-glucose 4,6-dehydratase/UDP-4-keto-6-deoxy-D-glucose 3,5-epimerase/UDP-4-keto-L-rhamnose-reductase RHM2 (667 aa).

An NAD(+)-binding site is contributed by 15-21 (GAAGFIA). T134 is a binding site for substrate. D135 functions as the Proton donor in the catalytic mechanism. Active-site proton acceptor residues include E136 and Y161. An NADP(+)-binding site is contributed by 389 to 395 (GKTGWLG).

The protein in the N-terminal section; belongs to the NAD(P)-dependent epimerase/dehydratase family. dTDP-glucose dehydratase subfamily. In the C-terminal section; belongs to the dTDP-4-dehydrorhamnose reductase family. NAD(+) serves as cofactor. NADP(+) is required as a cofactor. In terms of tissue distribution, expressed in roots, stems, leaves, seedlings, inflorescence tips, and siliques.

It catalyses the reaction UDP-alpha-D-glucose = UDP-4-dehydro-6-deoxy-alpha-D-glucose + H2O. The protein operates within carbohydrate biosynthesis. Trifunctional enzyme involved in UDP-beta-L-rhamnose biosynthesis, a precursor of the primary cell wall components rhamnogalacturonan I (RG-I) and rhamnogalacturonan II (RG-II). Catalyzes the dehydration of UDP-glucose to form UDP-4-dehydro-6-deoxy-D-glucose followed by the epimerization of the C3' and C5' positions of UDP-4-dehydro-6-deoxy-D-glucose to form UDP-4-keto-beta-L-rhamnose and the reduction of UDP-4-keto-beta-L-rhamnose to yield UDP-beta-L-rhamnose. Required for the normal seed coat epidermal development. This chain is Trifunctional UDP-glucose 4,6-dehydratase/UDP-4-keto-6-deoxy-D-glucose 3,5-epimerase/UDP-4-keto-L-rhamnose-reductase RHM2, found in Arabidopsis thaliana (Mouse-ear cress).